The sequence spans 309 residues: Maintenance of mitochondrial morphology protein 1 (309 aa).

Residues 1-16 lie on the Lumenal side of the membrane; the sequence is MGNAYIFSLQPTFTQG. The chain crosses the membrane as a helical span at residues 17–37; the sequence is LILGQFSILFLLVLVLKYLFF. Residues 38–309 lie on the Cytoplasmic side of the membrane; the sequence is DTVSDHAYRT…EQQAGELPVN (272 aa). An SMP-LTD domain is found at 84–293; the sequence is ECESADWLNA…LPGLASVSEV (210 aa).

It belongs to the MMM1 family. In terms of assembly, homodimer. Component of the ER-mitochondria encounter structure (ERMES) or MDM complex, composed of MMM1, MDM10, MDM12 and MDM34. An MMM1 homodimer associates with one molecule of MDM12 on each side in a pairwise head-to-tail manner, and the SMP-LTD domains of MMM1 and MDM12 generate a continuous hydrophobic tunnel for phospholipid trafficking.

Its subcellular location is the endoplasmic reticulum membrane. Its function is as follows. Component of the ERMES/MDM complex, which serves as a molecular tether to connect the endoplasmic reticulum (ER) and mitochondria. Components of this complex are involved in the control of mitochondrial shape and protein biogenesis, and function in nonvesicular lipid trafficking between the ER and mitochondria. The MDM12-MMM1 subcomplex functions in the major beta-barrel assembly pathway that is responsible for biogenesis of all outer membrane beta-barrel proteins, and acts in a late step after the SAM complex. The MDM10-MDM12-MMM1 subcomplex further acts in the TOM40-specific pathway after the action of the MDM12-MMM1 complex. Essential for establishing and maintaining the structure of mitochondria and maintenance of mtDNA nucleoids. This chain is Maintenance of mitochondrial morphology protein 1, found in Postia placenta (strain ATCC 44394 / Madison 698-R) (Brown rot fungus).